The sequence spans 127 residues: Modulator protein MzrA (127 aa).

Residues 1-10 (MLKPRITARQ) lie on the Cytoplasmic side of the membrane. A helical membrane pass occupies residues 11–31 (LIWISAFLLMLTILMMTWSTL). Topologically, residues 32-127 (RQQESTLAIR…RLRESSHRFG (96 aa)) are periplasmic.

Belongs to the MzrA family. Interacts with EnvZ.

The protein resides in the cell inner membrane. Functionally, modulates the activity of the EnvZ/OmpR two-component regulatory system, probably by directly modulating EnvZ enzymatic activity and increasing stability of phosphorylated OmpR. In Salmonella agona (strain SL483), this protein is Modulator protein MzrA.